A 722-amino-acid polypeptide reads, in one-letter code: BTB/POZ domain-containing protein 9 (722 aa).

The BTB domain maps to 46–112; sequence ADVEFIVEEE…IYSGTLLLST (67 aa). In terms of domain architecture, BACK spans 151–247; it reads CMILDAARLY…MNLEHLLQVV (97 aa). Positions 565–593 form a coiled coil; it reads QDKNYLKKIADMEKEREKREKEKKTAKTD. A compositionally biased stretch (basic and acidic residues) spans 577–594; it reads EKEREKREKEKKTAKTDD. Disordered regions lie at residues 577–626 and 640–722; these read EKER…VLRS and PLTP…RETL. A compositionally biased stretch (polar residues) spans 597–606; it reads IASTSGSSLA. Over residues 607-626 the composition is skewed to low complexity; that stretch reads SGHAESPSTSSSSSQSVLRS. The span at 641 to 658 shows a compositional bias: pro residues; it reads LTPPALSPPGTPALPAPL. Over residues 670-679 the composition is skewed to polar residues; that stretch reads EQNQPSNISA. Over residues 686 to 704 the composition is skewed to low complexity; sequence SPSSRSNPSPSLSRSRSQS.

Detected in the brain (at protein level).

Its subcellular location is the cytoplasm. Functionally, essential for the homeostatic regulation of sleep and motor activity, by depressing hyperactivity and wakefulness. May function, at least in part, by ensuring dopamine biosynthesis. The polypeptide is BTB/POZ domain-containing protein 9 (Drosophila melanogaster (Fruit fly)).